Consider the following 120-residue polypeptide: MFLLYEYDIFWAFLIISSAIPVLAFLISGVLSPIRKGPEKLSSYESGIEPIGDAWLQFRIRYYMFALVFVVFDVETVFLYPWAMSFDVLGVSAFIEALIFVLILILGLVYAWRKGALEWS.

The next 3 membrane-spanning stretches (helical) occupy residues 9–29 (IFWA…LISG), 64–84 (MFAL…PWAM), and 88–108 (VLGV…ILGL).

This sequence belongs to the complex I subunit 3 family. NDH is composed of at least 16 different subunits, 5 of which are encoded in the nucleus.

Its subcellular location is the plastid. The protein resides in the chloroplast thylakoid membrane. The catalysed reaction is a plastoquinone + NADH + (n+1) H(+)(in) = a plastoquinol + NAD(+) + n H(+)(out). It carries out the reaction a plastoquinone + NADPH + (n+1) H(+)(in) = a plastoquinol + NADP(+) + n H(+)(out). In terms of biological role, NDH shuttles electrons from NAD(P)H:plastoquinone, via FMN and iron-sulfur (Fe-S) centers, to quinones in the photosynthetic chain and possibly in a chloroplast respiratory chain. The immediate electron acceptor for the enzyme in this species is believed to be plastoquinone. Couples the redox reaction to proton translocation, and thus conserves the redox energy in a proton gradient. The chain is NAD(P)H-quinone oxidoreductase subunit 3, chloroplastic from Olimarabidopsis pumila (Dwarf rocket).